The primary structure comprises 427 residues: Phosphoribosylamine--glycine ligase (427 aa).

The 206-residue stretch at 110–315 (KDFCQRHGLP…IVPILLAAAK (206 aa)) folds into the ATP-grasp domain. 136–196 (LDTLEAPFVI…EEFMHGEEAS (61 aa)) provides a ligand contact to ATP. E285 and N287 together coordinate Mg(2+).

The protein belongs to the GARS family. The cofactor is Mg(2+). It depends on Mn(2+) as a cofactor.

It carries out the reaction 5-phospho-beta-D-ribosylamine + glycine + ATP = N(1)-(5-phospho-beta-D-ribosyl)glycinamide + ADP + phosphate + H(+). The protein operates within purine metabolism; IMP biosynthesis via de novo pathway; N(1)-(5-phospho-D-ribosyl)glycinamide from 5-phospho-alpha-D-ribose 1-diphosphate: step 2/2. The chain is Phosphoribosylamine--glycine ligase from Caulobacter vibrioides (strain ATCC 19089 / CIP 103742 / CB 15) (Caulobacter crescentus).